A 123-amino-acid polypeptide reads, in one-letter code: Large ribosomal subunit protein uL22c (123 aa).

This sequence belongs to the universal ribosomal protein uL22 family. As to quaternary structure, part of the 50S ribosomal subunit.

It localises to the plastid. The protein resides in the chloroplast. This protein binds specifically to 23S rRNA. In terms of biological role, the globular domain of the protein is located near the polypeptide exit tunnel on the outside of the subunit, while an extended beta-hairpin is found that lines the wall of the exit tunnel in the center of the 70S ribosome. The sequence is that of Large ribosomal subunit protein uL22c (rpl22) from Chara vulgaris (Common stonewort).